The following is a 194-amino-acid chain: MKKSLLTIVLAFSFVLGGAALAPTVSEAHGYVASPGSRAFFGSSAGGNLNTNVGRAQWEPQSIEAPKNTFITGKLASAGVSGFEPLDEQTATRWHKTNITTGPLDITWNLTAQHRTASWDYYITKNGWNPNQPLDIKNFDKIASIDGKQEVPNKVVKQTINIPTDRKGYHVIYAVWGIGDTVNAFYQAIDVNIQ.

Residues 1-28 (MKKSLLTIVLAFSFVLGGAALAPTVSEA) form the signal peptide. The Cu cation site is built by His29 and His114. The region spanning 29 to 191 (HGYVASPGSR…VNAFYQAIDV (163 aa)) is the Chitin-binding type-4 domain.

It depends on Cu(2+) as a cofactor.

The protein localises to the secreted. The catalysed reaction is [(1-&gt;4)-N-acetyl-beta-D-glucosaminyl]n+m + reduced acceptor + O2 = [(1-&gt;4)-N-acetyl-beta-D-glucosaminyl]m-1-(1-&gt;4)-2-(acetylamino)-2-deoxy-D-glucono-1,5-lactone + [(1-&gt;4)-N-acetyl-beta-D-glucosaminyl]n + acceptor + H2O.. It participates in glycan degradation; chitin degradation. Involved in chitin degradation. Catalyzes the oxidative cleavage of glycosidic bonds in both alpha- and beta-chitin via a copper-dependent mechanism, leading to oxidized chitooligosaccharides with a dominance of even-numbered products. Acts synergistically with the chitinase EfChi18A, and combining the two enzymes leads to rapid and complete depolymerization of crystalline chitin, especially with beta-chitin as a substrate. Is likely involved in a chitin degradation pathway that allows E.faecalis V583 to grow on chitin as a carbon source. This Enterococcus faecalis (strain ATCC 700802 / V583) protein is Lytic chitin monooxygenase.